We begin with the raw amino-acid sequence, 221 residues long: MRSSLLTLPKSFLGFMPLYLAVEIVLGISILNKCSGAYGILALFTGHPLDFMQWIAYLWSVFTLIVFSQGLYLIHKPNLLVFSQICVLYTIDTISTCFFTLWFTTQWFTLEDTANIDGNNALQSNPISTGKLTERGIDISKQSATESYEYTMTILITLVSLIFRFYFNFILASFVQELLHHPKYLVDRDDVEQNLKNKPIWKRLWAKSQKGCYKLCKNLLE.

4 consecutive transmembrane segments (helical) span residues 11-31 (SFLG…ISIL), 54-74 (WIAY…LYLI), 79-99 (LLVF…TCFF), and 154-174 (ILIT…LASF). The segment at 176 to 221 (QELLHHPKYLVDRDDVEQNLKNKPIWKRLWAKSQKGCYKLCKNLLE) is COPI vesicle-binding.

This sequence belongs to the KEI1 family. As to quaternary structure, component of the inositol phosphorylceramide synthase complex composed of at least AUR1 and KEI1. Interacts (via C-terminal region) with COP1 and SEC21. Note=The interaction with AUR1 seems to occur with the full-length protein before cleavage by KEX2 since both full-length and short chains of KEI1 interact with AUR1. The precursor protein is cleaved into two polypeptide chains, KEI1N and KEI1C. The cleavage is performed in the Golgi apparatus by the KEX2 protease which recognizes residue Arg-135. Generation of KEX2 cleavage site may have been an accidental event in evolution without specific advantages or disadvantages in IPC synthesis.

Its subcellular location is the golgi apparatus membrane. Regulatory component of the inositol phosphorylceramide (ICP) synthase which catalyzes the addition of a phosphorylinositol group onto ceramide to form inositol phosphorylceramide, an essential step in sphingolipid biosynthesis. Helps the medial Golgi localization of IPC synthase in a COPI vesicle-dependent manner. The polypeptide is Inositol phosphorylceramide synthase regulatory subunit KEI1 (KEI1) (Saccharomyces cerevisiae (strain ATCC 204508 / S288c) (Baker's yeast)).